The primary structure comprises 42 residues: Large ribosomal subunit protein bL36 (42 aa).

The protein belongs to the bacterial ribosomal protein bL36 family.

This is Large ribosomal subunit protein bL36 from Wolbachia pipientis subsp. Culex pipiens (strain wPip).